The sequence spans 160 residues: Globin-like protein (160 aa).

The Globin domain occupies 2–152 (SMTRQEIQDL…FNAECQVHLK (151 aa)). His-101 provides a ligand contact to heme.

This sequence belongs to the globin family.

It localises to the cytoplasm. In terms of biological role, may be a globin and may play a role in oxygen transport. The polypeptide is Globin-like protein (glb-1) (Caenorhabditis briggsae).